The primary structure comprises 298 residues: Glutamate/glycine mitochondrial carrier ymc1 (298 aa).

3 Solcar repeats span residues Thr14–Phe98, Val106–Asn193, and Thr206–His294. 6 helical membrane passes run Phe17–Val37, Leu67–Ile87, Tyr112–Val132, Thr172–Lys192, Cys212–Val232, and Phe266–Val287.

It belongs to the mitochondrial carrier (TC 2.A.29) family.

The protein resides in the mitochondrion inner membrane. Acts as a glutamate and glycine mitochondrial transmembrane transporter. The sequence is that of Glutamate/glycine mitochondrial carrier ymc1 (ymc1) from Schizosaccharomyces pombe (strain 972 / ATCC 24843) (Fission yeast).